Here is an 86-residue protein sequence, read N- to C-terminus: UPF0386 protein RC1_1783 (86 aa).

This sequence belongs to the UPF0386 family.

The protein is UPF0386 protein RC1_1783 of Rhodospirillum centenum (strain ATCC 51521 / SW).